A 182-amino-acid chain; its full sequence is Peptidyl-tRNA hydrolase (182 aa).

Residue Tyr-14 participates in tRNA binding. The active-site Proton acceptor is the His-19. Phe-64, Asn-66, and Asn-112 together coordinate tRNA.

This sequence belongs to the PTH family. As to quaternary structure, monomer.

It localises to the cytoplasm. It catalyses the reaction an N-acyl-L-alpha-aminoacyl-tRNA + H2O = an N-acyl-L-amino acid + a tRNA + H(+). Functionally, hydrolyzes ribosome-free peptidyl-tRNAs (with 1 or more amino acids incorporated), which drop off the ribosome during protein synthesis, or as a result of ribosome stalling. Catalyzes the release of premature peptidyl moieties from peptidyl-tRNA molecules trapped in stalled 50S ribosomal subunits, and thus maintains levels of free tRNAs and 50S ribosomes. The sequence is that of Peptidyl-tRNA hydrolase from Wolbachia sp. subsp. Drosophila simulans (strain wRi).